Here is a 431-residue protein sequence, read N- to C-terminus: NADH-quinone oxidoreductase subunit F (431 aa).

An NAD(+)-binding site is contributed by 54 to 63 (GRGGAGFPTG). An FMN-binding site is contributed by 167 to 214 (GAGAYICGEETALLESLEGKKGMPRMKPPFPAGSGLYGCPTTVNNVES). [4Fe-4S] cluster is bound by residues Cys-346, Cys-349, Cys-352, and Cys-392.

It belongs to the complex I 51 kDa subunit family. The cofactor is FMN. Requires [4Fe-4S] cluster as cofactor.

The catalysed reaction is a quinone + NADH + 5 H(+)(in) = a quinol + NAD(+) + 4 H(+)(out). Its function is as follows. NDH-1 shuttles electrons from NADH, via FMN and iron-sulfur (Fe-S) centers, to quinones in the respiratory chain. The immediate electron acceptor for the enzyme in this species is believed to be ubiquinone. Couples the redox reaction to proton translocation (for every two electrons transferred, four hydrogen ions are translocated across the cytoplasmic membrane), and thus conserves the redox energy in a proton gradient. The polypeptide is NADH-quinone oxidoreductase subunit F (nuoF) (Rhodobacter capsulatus (Rhodopseudomonas capsulata)).